The chain runs to 787 residues: Disintegrin and metalloproteinase domain-containing protein 32 (787 aa).

Residues 1–16 form the signal peptide; that stretch reads MFRLWLLLAGLCGLLA. Phosphoserine is present on Ser17. Residues 17–174 constitute a propeptide that is removed on maturation; that stretch reads SRPGFQNSLL…PMDDNIFISE (158 aa). Residues Asn39 and Asn125 are each glycosylated (N-linked (GlcNAc...) asparagine). Residues 175-682 are Extracellular-facing; it reads KSEPAVPDLF…ERASGKTENT (508 aa). The region spanning 186–383 is the Peptidase M12B domain; sequence LYLEMHIVVD…VGVKCLQNKP (198 aa). 4 cysteine pairs are disulfide-bonded: Cys295–Cys378, Cys337–Cys362, Cys339–Cys344, and Cys450–Cys471. A Disintegrin domain is found at 391-479; the sequence is KPVCGNGRLE…ECGPDITLIN (89 aa). Asn465 and Asn598 each carry an N-linked (GlcNAc...) asparagine glycan. One can recognise an EGF-like domain in the interval 622–654; sequence SAHVCSQQCSGHGVCDSRNKCHCSPGYKPPNCQ. 3 disulfides stabilise this stretch: Cys626–Cys636, Cys630–Cys642, and Cys644–Cys653. A helical membrane pass occupies residues 683–703; the sequence is WLLGFLIALPILIVTTAIVLA. Residues 704–787 lie on the Cytoplasmic side of the membrane; sequence RKQLKKWFAK…DSTQTQSSSN (84 aa). Residues 715-787 form a disordered region; sequence EEFPSSESKS…DSTQTQSSSN (73 aa). The segment covering 728–749 has biased composition (polar residues); sequence TQTYASQSSSEGSTQTYASQTR. Low complexity predominate over residues 771–787; sequence TSRSKSQDSTQTQSSSN.

In terms of tissue distribution, testis specific.

The protein localises to the membrane. In terms of biological role, may play a role in sperm development and fertilization This is a non-catalytic metalloprotease-like protein. The protein is Disintegrin and metalloproteinase domain-containing protein 32 (ADAM32) of Homo sapiens (Human).